Here is a 409-residue protein sequence, read N- to C-terminus: Histone deacetylase 7 (409 aa).

The histone deacetylase stretch occupies residues 11-324; the sequence is RVSYFYEPMI…WCYETAIAVG (314 aa). H148 acts as the Proton donor/acceptor in catalysis. D267 is a binding site for Zn(2+). Residues 383–409 are disordered; the sequence is PFQDTPSSSQATEAAEVDMEKRNDPRI. Over residues 384–394 the composition is skewed to polar residues; it reads FQDTPSSSQAT. Over residues 400–409 the composition is skewed to basic and acidic residues; the sequence is DMEKRNDPRI.

The protein belongs to the histone deacetylase family. HD type 1 subfamily. It depends on Zn(2+) as a cofactor. Low expression in flowers.

The protein localises to the nucleus. It catalyses the reaction N(6)-acetyl-L-lysyl-[histone] + H2O = L-lysyl-[histone] + acetate. In terms of biological role, responsible for the deacetylation of lysine residues on the N-terminal part of the core histones (H2A, H2B, H3 and H4). Histone deacetylation gives a tag for epigenetic repression and plays an important role in transcriptional regulation, cell cycle progression and developmental events. May be involved in flowering induction. Histone deacetylases act via the formation of large multiprotein complexes. This Arabidopsis thaliana (Mouse-ear cress) protein is Histone deacetylase 7 (HDA7).